A 633-amino-acid chain; its full sequence is NBPF family member NBPF3 (633 aa).

The interval 15-52 is disordered; that stretch reads RGPDVETSPFGAPRAASHGVGRHQELRDPTVPGPTSSA. Residues 127 to 186 are a coiled coil; the sequence is LRDERLLTEEKLAEELGQAEELRQYKVLVHSQERELTQLREKLQEGRDASRSLNQHLQAL. Olduvai domains are found at residues 221 to 313, 314 to 402, 405 to 460, 461 to 552, and 555 to 633; these read ENDD…CIIP, ENES…ATSP, SREL…LDLD, RMKK…PPCP, and NEVL…IFPH. Over residues 316–326 the composition is skewed to basic and acidic residues; that stretch reads ESDHEQEEEKG. The tract at residues 316-370 is disordered; it reads ESDHEQEEEKGPVSPRNLQESEEEEAPQESWDEGDWTLSIPPDMSASYQSDRSTF. Acidic residues predominate over residues 335–350; the sequence is ESEEEEAPQESWDEGD. The interval 463–484 is disordered; it reads KKDQEEEEDQGPPCPRLSRELP.

The protein belongs to the NBPF family. In terms of tissue distribution, expressed in testis and fetal heart, as well as in non small cell lung carcinoma and neuroblastoma cell line.

Its subcellular location is the cytoplasm. This Homo sapiens (Human) protein is NBPF family member NBPF3.